The sequence spans 466 residues: Acetylornithine aminotransferase, mitochondrial (466 aa).

Position 308 is an N6-(pyridoxal phosphate)lysine (Lys-308).

This sequence belongs to the class-III pyridoxal-phosphate-dependent aminotransferase family. Pyridoxal 5'-phosphate is required as a cofactor.

The protein localises to the mitochondrion matrix. The enzyme catalyses N(2)-acetyl-L-ornithine + 2-oxoglutarate = N-acetyl-L-glutamate 5-semialdehyde + L-glutamate. Its pathway is amino-acid biosynthesis; L-arginine biosynthesis; N(2)-acetyl-L-ornithine from L-glutamate: step 4/4. The polypeptide is Acetylornithine aminotransferase, mitochondrial (ARG8) (Debaryomyces hansenii (strain ATCC 36239 / CBS 767 / BCRC 21394 / JCM 1990 / NBRC 0083 / IGC 2968) (Yeast)).